A 216-amino-acid chain; its full sequence is Adenylate kinase (216 aa).

10 to 15 (GAGKGT) contacts ATP. Positions 30-59 (STGDIFRKNISEKTPLGVKAKEYMDKGQLV) are NMP. AMP is bound by residues T31, R36, 57–59 (QLV), 85–88 (GFPR), and Q92. Residues 126-163 (GRRVCPSCGASYHIKFNPPKIEGLCDVCKKEVIQRKDD) are LID. R127 is a binding site for ATP. Residues C130 and C133 each contribute to the Zn(2+) site. 136–137 (SY) provides a ligand contact to ATP. Zn(2+)-binding residues include C150 and C153. Residues R160 and R171 each contribute to the AMP site. Q199 provides a ligand contact to ATP.

Belongs to the adenylate kinase family. In terms of assembly, monomer.

Its subcellular location is the cytoplasm. The enzyme catalyses AMP + ATP = 2 ADP. It participates in purine metabolism; AMP biosynthesis via salvage pathway; AMP from ADP: step 1/1. Functionally, catalyzes the reversible transfer of the terminal phosphate group between ATP and AMP. Plays an important role in cellular energy homeostasis and in adenine nucleotide metabolism. In Clostridium novyi (strain NT), this protein is Adenylate kinase.